The primary structure comprises 471 residues: 7-dehydrocholesterol reductase (471 aa).

The tract at residues 1–23 is disordered; the sequence is MASKSQHNAPKVKSPNGKAGSQG. S14 is modified (phosphoserine). 8 consecutive transmembrane segments (helical) span residues 36–56, 95–115, 144–164, 173–193, 233–253, 262–282, 302–322, and 327–347; these read LASI…FIMA, LYAL…DFCH, LQAW…LSWF, WIPL…FAMI, LFFN…SFAA, VTNS…DFFW, LGWG…LYLV, and QLST…YYIF. Residues K354, R358, L391, W396, and 403–404 each bind NADP(+); that span reads NY. The helical transmembrane segment at 416–436 threads the bilayer; it reads LACGGGHLLPYFYIIYMTILL. NADP(+) contacts are provided by residues D443, 447–451, and Y458; that span reads CANKY.

The protein belongs to the ERG4/ERG24 family. As to quaternary structure, interacts with DHCR24; this interaction regulates DHCR7 activity. Interacts with TMEM147.

The protein resides in the endoplasmic reticulum membrane. It catalyses the reaction cholesterol + NADP(+) = 7-dehydrocholesterol + NADPH + H(+). The catalysed reaction is 7-dehydrodesmosterol + NADPH + H(+) = desmosterol + NADP(+). The enzyme catalyses 5,6alpha-epoxy-5alpha-cholestan-3beta-ol + H2O = 5alpha-cholestane-3beta,5,6beta-triol. It carries out the reaction 5,6beta-epoxy-5beta-cholestan-3beta-ol + H2O = 5alpha-cholestane-3beta,5,6beta-triol. It participates in steroid biosynthesis; cholesterol biosynthesis. In terms of biological role, oxidoreductase that catalyzes the last step of the cholesterol synthesis pathway, which transforms cholesta-5,7-dien-3beta-ol (7-dehydrocholesterol,7-DHC) into cholesterol by reducing the C7-C8 double bond of its sterol core. Can also metabolize cholesta-5,7,24-trien-3beta-ol (7-dehydrodemosterol, 7-DHD) to desmosterol, which is then metabolized by the Delta(24)-sterol reductase (DHCR24) to cholesterol. Modulates ferroptosis (a form of regulated cell death driven by iron-dependent lipid peroxidation) through the metabolic breakdown of the anti-ferroptotic metabolites 7-DHC and 7-DHD which, when accumulated, divert the propagation of peroxyl radical-mediated damage from phospholipid components to its sterol core, protecting plasma and mitochondrial membranes from phospholipid autoxidation. Component of the microsomal antiestrogen binding site (AEBS), a multiproteic complex at the ER membrane that consists of an association between cholestenol Delta-isomerase/EBP and DHCR7. This complex is responsible for cholesterol-5,6-epoxide hydrolase (ChEH) activity, which consists in the hydration of cholesterol-5,6-epoxides (5,6-EC) into cholestane-3beta,5alpha,6beta-triol (CT). The precise role of each component of this complex has not been described yet. In Mus musculus (Mouse), this protein is 7-dehydrocholesterol reductase (Dhcr7).